The primary structure comprises 294 residues: Cytidine deaminase (294 aa).

2 CMP/dCMP-type deaminase domains span residues 48 to 168 (DEDA…FGPK) and 186 to 294 (LTGD…VLLG). 89-91 (NME) serves as a coordination point for substrate. Residue histidine 102 coordinates Zn(2+). The Proton donor role is filled by glutamate 104. 2 residues coordinate Zn(2+): cysteine 129 and cysteine 132.

Belongs to the cytidine and deoxycytidylate deaminase family. As to quaternary structure, homodimer. Zn(2+) serves as cofactor.

The catalysed reaction is cytidine + H2O + H(+) = uridine + NH4(+). It catalyses the reaction 2'-deoxycytidine + H2O + H(+) = 2'-deoxyuridine + NH4(+). In terms of biological role, this enzyme scavenges exogenous and endogenous cytidine and 2'-deoxycytidine for UMP synthesis. The protein is Cytidine deaminase of Salmonella arizonae (strain ATCC BAA-731 / CDC346-86 / RSK2980).